Here is a 318-residue protein sequence, read N- to C-terminus: Ribonuclease Z (318 aa).

Positions 62, 64, 66, 67, 139, 210, and 268 each coordinate Zn(2+). Catalysis depends on Asp66, which acts as the Proton acceptor.

Belongs to the RNase Z family. Homodimer. It depends on Zn(2+) as a cofactor.

It carries out the reaction Endonucleolytic cleavage of RNA, removing extra 3' nucleotides from tRNA precursor, generating 3' termini of tRNAs. A 3'-hydroxy group is left at the tRNA terminus and a 5'-phosphoryl group is left at the trailer molecule.. Zinc phosphodiesterase, which displays some tRNA 3'-processing endonuclease activity. Probably involved in tRNA maturation, by removing a 3'-trailer from precursor tRNA. This chain is Ribonuclease Z, found in Microcystis aeruginosa (strain NIES-843 / IAM M-2473).